The primary structure comprises 301 residues: Sulfate adenylyltransferase subunit 2 (301 aa).

The disordered stretch occupies residues 279 to 301 (RQGRLIDRDEAGSMEKKKREGYF).

The protein belongs to the PAPS reductase family. CysD subfamily. As to quaternary structure, heterodimer composed of CysD, the smaller subunit, and CysN.

The enzyme catalyses sulfate + ATP + H(+) = adenosine 5'-phosphosulfate + diphosphate. It participates in sulfur metabolism; hydrogen sulfide biosynthesis; sulfite from sulfate: step 1/3. Its function is as follows. With CysN forms the ATP sulfurylase (ATPS) that catalyzes the adenylation of sulfate producing adenosine 5'-phosphosulfate (APS) and diphosphate, the first enzymatic step in sulfur assimilation pathway. APS synthesis involves the formation of a high-energy phosphoric-sulfuric acid anhydride bond driven by GTP hydrolysis by CysN coupled to ATP hydrolysis by CysD. This chain is Sulfate adenylyltransferase subunit 2, found in Mesorhizobium japonicum (strain LMG 29417 / CECT 9101 / MAFF 303099) (Mesorhizobium loti (strain MAFF 303099)).